The primary structure comprises 217 residues: TLD domain-containing protein 2 (217 aa).

The tract at residues 1 to 48 is disordered; it reads MKSLRWRYTRLPSQVEDALSGEEDKEEEEEKEEETTPAPTPVPEHPMV. Positions 19–35 are enriched in acidic residues; the sequence is LSGEEDKEEEEEKEEET. The TLDc domain occupies 56–217; that stretch reads QVLGASEMSQ…ISELEAWVLS (162 aa).

It belongs to the OXR1 family.

This is TLD domain-containing protein 2 (TLDC2) from Bos taurus (Bovine).